Here is a 151-residue protein sequence, read N- to C-terminus: Probable ubiquitin-conjugating enzyme E2 W-A (151 aa).

The region spanning 3–151 is the UBC core domain; that stretch reads SMQKRLQKEL…TKWWYHDDTC (149 aa). The active-site Glycyl thioester intermediate is Cys91.

It belongs to the ubiquitin-conjugating enzyme family.

It is found in the nucleus. The enzyme catalyses S-ubiquitinyl-[E1 ubiquitin-activating enzyme]-L-cysteine + [E2 ubiquitin-conjugating enzyme]-L-cysteine = [E1 ubiquitin-activating enzyme]-L-cysteine + S-ubiquitinyl-[E2 ubiquitin-conjugating enzyme]-L-cysteine.. The catalysed reaction is S-ubiquitinyl-[E1 ubiquitin-activating enzyme]-L-cysteine + [acceptor protein]-N-terminal-amino acid = [E1 ubiquitin-activating enzyme]-L-cysteine + N-terminal-ubiquitinyl-[acceptor protein].. The protein operates within protein modification; protein ubiquitination. Its function is as follows. Accepts ubiquitin from the E1 complex and catalyzes its covalent attachment to other proteins. Catalyzes monoubiquitination. Involved in degradation of misfolded chaperone substrate and DNA repair. The polypeptide is Probable ubiquitin-conjugating enzyme E2 W-A (ube2wa) (Danio rerio (Zebrafish)).